Here is a 443-residue protein sequence, read N- to C-terminus: Tubulin beta-1 chain (443 aa).

The GTP site is built by Gln-11, Glu-69, Ser-138, Gly-142, Thr-143, Gly-144, Asn-204, and Asn-226. Glu-69 lines the Mg(2+) pocket. The disordered stretch occupies residues 424–443 (QYQDATAEREGEYEEDYDEA). Residues 434–443 (GEYEEDYDEA) show a composition bias toward acidic residues.

This sequence belongs to the tubulin family. Dimer of alpha and beta chains. A typical microtubule is a hollow water-filled tube with an outer diameter of 25 nm and an inner diameter of 15 nM. Alpha-beta heterodimers associate head-to-tail to form protofilaments running lengthwise along the microtubule wall with the beta-tubulin subunit facing the microtubule plus end conferring a structural polarity. Microtubules usually have 13 protofilaments but different protofilament numbers can be found in some organisms and specialized cells. The cofactor is Mg(2+).

Its subcellular location is the cytoplasm. The protein resides in the cytoskeleton. Functionally, tubulin is the major constituent of microtubules, a cylinder consisting of laterally associated linear protofilaments composed of alpha- and beta-tubulin heterodimers. Microtubules grow by the addition of GTP-tubulin dimers to the microtubule end, where a stabilizing cap forms. Below the cap, tubulin dimers are in GDP-bound state, owing to GTPase activity of alpha-tubulin. In Anemia phyllitidis (Fern), this protein is Tubulin beta-1 chain (TUBB1).